We begin with the raw amino-acid sequence, 907 residues long: DNA (cytosine-5)-methyltransferase CMT3 (907 aa).

Low complexity predominate over residues 1–15; sequence MAPSSPSSAAAPTRT. The interval 1-154 is disordered; the sequence is MAPSSPSSAA…RNAATRRPDE (154 aa). Basic and acidic residues predominate over residues 30 to 63; the sequence is ATDEPSTKRTRRPKAETKPRKKKDEVKEEEKPPM. Residues 64–89 are compositionally biased toward acidic residues; it reads EDDACGEEPDAEEMALGEEAEAEEAE. Basic and acidic residues-rich tracts occupy residues 115-124 and 131-140; these read HGSDGDHDPE and PAKEARDKWP. Residues 172 to 297 form the BAH domain; that stretch reads TLYCLHDDVY…VAYSTFANIP (126 aa). The disordered stretch occupies residues 303–323; the sequence is SGSDTASDISSDDVDSSKGKV. The SAM-dependent MTase C5-type domain occupies 335–868; the sequence is ATLLDLYSGC…YSLGLAYQRE (534 aa). Residues 437-500 enclose the Chromo domain; that stretch reads FVVEKLAGIC…EGYRRKILPL (64 aa). The active site involves C513.

The protein belongs to the class I-like SAM-binding methyltransferase superfamily. C5-methyltransferase family.

The protein resides in the nucleus. It catalyses the reaction a 2'-deoxycytidine in DNA + S-adenosyl-L-methionine = a 5-methyl-2'-deoxycytidine in DNA + S-adenosyl-L-homocysteine + H(+). Its function is as follows. Involved in CpXpG DNA methylation. Plays a critical role in the maintenance of CpXpG DNA methylation and suppression of a wide spectrum of transposable element (TE) activities. Required for proper plant development in reproductive stage. The polypeptide is DNA (cytosine-5)-methyltransferase CMT3 (Oryza sativa subsp. japonica (Rice)).